A 184-amino-acid chain; its full sequence is UPF0149 protein Avin_47340 (184 aa).

The protein belongs to the UPF0149 family.

This is UPF0149 protein Avin_47340 from Azotobacter vinelandii (strain DJ / ATCC BAA-1303).